The following is a 276-amino-acid chain: Exosome complex component Rrp42 (276 aa).

The protein belongs to the RNase PH family. Rrp42 subfamily. Component of the archaeal exosome complex. Forms a hexameric ring-like arrangement composed of 3 Rrp41-Rrp42 heterodimers. The hexameric ring associates with a trimer of Rrp4 and/or Csl4 subunits.

The protein resides in the cytoplasm. Its function is as follows. Non-catalytic component of the exosome, which is a complex involved in RNA degradation. Contributes to the structuring of the Rrp41 active site. The chain is Exosome complex component Rrp42 from Aeropyrum pernix (strain ATCC 700893 / DSM 11879 / JCM 9820 / NBRC 100138 / K1).